The following is a 726-amino-acid chain: BRCA1-A complex subunit RAP80 (726 aa).

Positions 1 to 27 are disordered; that stretch reads MPRRKKKIKEASEGQNLEKKDLETTSS. The tract at residues 1 to 101 is necessary for transcriptional repression; the sequence is MPRRKKKIKE…SEQEAKEVNN (101 aa). Residues 9–23 show a composition bias toward basic and acidic residues; it reads KEASEGQNLEKKDLE. A Glycyl lysine isopeptide (Lys-Gly) (interchain with G-Cter in SUMO2) cross-link involves residue K20. S29 is subject to Phosphoserine. K31 is covalently cross-linked (Glycyl lysine isopeptide (Lys-Gly) (interchain with G-Cter in SUMO2)). Residues S44 and S46 each carry the phosphoserine modification. A disordered region spans residues 47–67; the sequence is DGEETKEENGLQKMKTKQSNR. A Phosphothreonine modification is found at T51. The LR motif signature appears at 60 to 78; that stretch reads MKTKQSNRSKCLAKRKIAQ. Glycyl lysine isopeptide (Lys-Gly) (interchain with G-Cter in SUMO2) cross-links involve residues K75 and K90. UIM domains are found at residues 80-99 and 104-124; these read SEEEQFALALKMSEQEAKEV and EKEEELLRKAIAESLNSRWSS. 2 disordered regions span residues 93–112 and 119–208; these read EQEAKEVNNQEEKEEELLRK and NSRW…SRPV. The segment at 97–103 is UIM-linker; that stretch reads KEVNNQE. The necessary for interaction with NR6A1 N-terminus stretch occupies residues 100–200; it reads NNQEEKEEEL…EEPLSGSSGS (101 aa). S140 bears the Phosphoserine mark. Basic and acidic residues predominate over residues 177 to 188; it reads EEGKEPWDHSEN. Residues 194–205 show a composition bias toward low complexity; sequence LSGSSGSQDQSS. The residue at position 205 (S205) is a Phosphoserine. A Glycyl lysine isopeptide (Lys-Gly) (interchain with G-Cter in SUMO2) cross-link involves residue K245. The segment at 270–400 is AIR; sequence IGGTVHYYWG…EEEPTTGRGQ (131 aa). A disordered region spans residues 356-411; it reads GAREERQGSGASVWHSETKDSQKSPITSLKQRLLLEEEPTTGRGQSSQGLFVEETS. Residues S379, S402, and S427 each carry the phosphoserine modification. Positions 400-507 are necessary for interaction with NR6A1 C-terminus; it reads QSSQGLFVEE…DSRPPAVSAS (108 aa). Residue K436 forms a Glycyl lysine isopeptide (Lys-Gly) (interchain with G-Cter in SUMO2) linkage. The UBZ4-type zinc finger occupies 509–536; that stretch reads RVSCPLCNQDFPPTKIEQHAMYCTGLME. Zn(2+) contacts are provided by C512, C515, H527, and C531. The segment at 512–589 is zinc-finger-like region; that stretch reads CPLCNQDFPP…GEYQCHVETC (78 aa). Glycyl lysine isopeptide (Lys-Gly) (interchain with G-Cter in SUMO2) cross-links involve residues K551, K569, and K616. Residues 611 to 675 form a disordered region; the sequence is APVEGKPKQR…DVEEAGCSRE (65 aa). Position 636 is a phosphoserine (S636). Basic and acidic residues predominate over residues 640 to 653; the sequence is QSEHRTTGVERTPK. Residues S664 and S688 each carry the phosphoserine modification. A Glycyl lysine isopeptide (Lys-Gly) (interchain with G-Cter in SUMO2) cross-link involves residue K707.

The protein belongs to the RAP80 family. Component of the ARISC complex, at least composed of UIMC1/RAP80, ABRAXAS1, BRCC3/BRCC36, BABAM2 and BABAM1/NBA1. Component of the BRCA1-A complex, at least composed of the BRCA1, BARD1, UIMC1/RAP80, ABRAXAS1, BRCC3/BRCC36, BABAM2 and BABAM1/NBA1. In the BRCA1-A complex, interacts directly with ABRAXAS1. Interacts with UBE2I. Interacts with NR6A1. Interacts with ESR1. Interacts with TSP57. Interacts with TRAIP. Sumoylated. Post-translationally, phosphorylated upon DNA damage by ATM or ATR.

The protein localises to the nucleus. In terms of biological role, ubiquitin-binding protein. Specifically recognizes and binds 'Lys-63'-linked ubiquitin. Plays a central role in the BRCA1-A complex by specifically binding 'Lys-63'-linked ubiquitinated histones H2A and H2AX at DNA lesions sites, leading to target the BRCA1-BARD1 heterodimer to sites of DNA damage at double-strand breaks (DSBs). The BRCA1-A complex also possesses deubiquitinase activity that specifically removes 'Lys-63'-linked ubiquitin on histones H2A and H2AX. Also weakly binds monoubiquitin but with much less affinity than 'Lys-63'-linked ubiquitin. May interact with monoubiquitinated histones H2A and H2B; the relevance of such results is however unclear in vivo. Does not bind Lys-48'-linked ubiquitin. May indirectly act as a transcriptional repressor by inhibiting the interaction of NR6A1 with the corepressor NCOR1. The protein is BRCA1-A complex subunit RAP80 (Uimc1) of Rattus norvegicus (Rat).